A 236-amino-acid polypeptide reads, in one-letter code: Ubiquinone biosynthesis O-methyltransferase (236 aa).

Residues Arg39, Gly59, Asp80, and Met124 each coordinate S-adenosyl-L-methionine.

It belongs to the methyltransferase superfamily. UbiG/COQ3 family.

The enzyme catalyses a 3-demethylubiquinol + S-adenosyl-L-methionine = a ubiquinol + S-adenosyl-L-homocysteine + H(+). It carries out the reaction a 3-(all-trans-polyprenyl)benzene-1,2-diol + S-adenosyl-L-methionine = a 2-methoxy-6-(all-trans-polyprenyl)phenol + S-adenosyl-L-homocysteine + H(+). It functions in the pathway cofactor biosynthesis; ubiquinone biosynthesis. Its function is as follows. O-methyltransferase that catalyzes the 2 O-methylation steps in the ubiquinone biosynthetic pathway. The polypeptide is Ubiquinone biosynthesis O-methyltransferase (Shewanella sp. (strain W3-18-1)).